The primary structure comprises 547 residues: GID complex substrate-recognition subunit 10 (547 aa).

Composition is skewed to polar residues over residues 1–11 and 28–41; these read MPRSLDNFQNE and GFPN…SNSQ. Disordered regions lie at residues 1 to 42, 60 to 115, 169 to 217, and 285 to 313; these read MPRS…NSQR, EQDS…SNAT, RNSS…NPQS, and PAVL…QTPN. The span at 99–108 shows a compositional bias: basic residues; the sequence is SASRQRRRSG. A compositionally biased stretch (polar residues) spans 169–185; that stretch reads RNSSTFGSNPNSVFSAQ. Low complexity-rich tracts occupy residues 186–199, 207–217, and 298–307; these read PTEP…SSFP, SRSISISNPQS, and SSSSASSYGS.

The protein belongs to the GID4/VID24 family. As to quaternary structure, substrate-recognition component of the GID/CTLH complex. In the absence of stress, the complex exists as an inactive anticipatory complex (GID(Ant)), composed of Gid1, the E3 ubiquitin-ligase Gid2, Gid5, Gid8, and the RING-like subunit Gid9, awaiting a substrate receptor to form the active E3 ligase complex. When cells are shifted to glucose-containing medium, the substrate receptor Gid4 is induced and becomes part of the complex, named GID(SR4). Additionally, Gid7 transforms the GID(SR4) E3 ligase core into a higher-order supramolecular assembly (Chelator-GID(SR4)). Under osmotic or heat stress, the substrate receptor Gid10 is induced and becomes part of the complex, named GID(SR10). Interacts with proteins that have an N-terminal Pro/N-degron.

The protein localises to the nucleus. Its function is as follows. Substrate-recognition component of the GID E3 ligase complex recruiting N termini and catalyzing ubiquitination of proteins targeted for degradation. GID E3 is regulated through assembly with interchangeable N-degron-binding substrate receptors induced by distinct environmental perturbations. Required for the adaptation to osmotic or heat stress. Specific for substrates with an N-terminal Pro (Pro/N-degron). The chain is GID complex substrate-recognition subunit 10 (gid10) from Schizosaccharomyces pombe (strain 972 / ATCC 24843) (Fission yeast).